Consider the following 947-residue polypeptide: Protein translocase subunit SecA (947 aa).

ATP is bound by residues Gln87, 105 to 109 (GEGKT), and Asp494. A disordered region spans residues 860 to 947 (TAPKPLPTQE…NRAPKSKRKR (88 aa)). Residues 870 to 885 (AAARTTGTAAPTALRA) show a composition bias toward low complexity. Composition is skewed to basic and acidic residues over residues 903-914 (EDGKAKATRDSA) and 922-931 (ASRRERREAA).

Belongs to the SecA family. Monomer and homodimer. Part of the essential Sec protein translocation apparatus which comprises SecA, SecYEG and auxiliary proteins SecDF. Other proteins may also be involved.

Its subcellular location is the cell membrane. The protein resides in the cytoplasm. It catalyses the reaction ATP + H2O + cellular proteinSide 1 = ADP + phosphate + cellular proteinSide 2.. Part of the Sec protein translocase complex. Interacts with the SecYEG preprotein conducting channel. Has a central role in coupling the hydrolysis of ATP to the transfer of proteins into and across the cell membrane, serving as an ATP-driven molecular motor driving the stepwise translocation of polypeptide chains across the membrane. The chain is Protein translocase subunit SecA from Rhodococcus erythropolis (strain PR4 / NBRC 100887).